The sequence spans 358 residues: MATGDDSFLWDQDSILSRDLFSATSAELCYENLNRSCVRSPYSPGPRLILYAVFGFGAVLAVCGNLLVMTSILHFRQLHSPANFLVASLACADFLVGLTVMPFSTVRSVEGCWYFGEIYCKLHTCFDVSFCSSSIFHLCFISVDRYIAVSDPLIYPTRFTASVSNKCITFSWLLSISYGFSLIYTGASEAGLEDLVSALTCVGGCQLAVNQSWVFINFLLFLIPTLVMITVYSKIFLIAKQQAQNIEKMSKQTARASDSYKDRVAKRERKAAKTLGIAVAAFLLSWLPYFIDSFIDAFLGFITPTYVYEILVWIAYYNSAMNPLIYAFFYPWFRKAIKLTVTGKILRENSSTTNLFPE.

Over 1–47 the chain is Extracellular; it reads MATGDDSFLWDQDSILSRDLFSATSAELCYENLNRSCVRSPYSPGPR. Asn-34 is a glycosylation site (N-linked (GlcNAc...) asparagine). 2 disulfides stabilise this stretch: Cys-37–Cys-201 and Cys-120–Cys-205. Residues 48-68 form a helical membrane-spanning segment; the sequence is LILYAVFGFGAVLAVCGNLLV. At 69-83 the chain is on the cytoplasmic side; the sequence is MTSILHFRQLHSPAN. The helical transmembrane segment at 84–104 threads the bilayer; it reads FLVASLACADFLVGLTVMPFS. The Extracellular portion of the chain corresponds to 105–121; sequence TVRSVEGCWYFGEIYCK. The helical transmembrane segment at 122 to 143 threads the bilayer; sequence LHTCFDVSFCSSSIFHLCFISV. The Cytoplasmic segment spans residues 144–166; that stretch reads DRYIAVSDPLIYPTRFTASVSNK. The chain crosses the membrane as a helical span at residues 167 to 187; it reads CITFSWLLSISYGFSLIYTGA. Over 188-212 the chain is Extracellular; the sequence is SEAGLEDLVSALTCVGGCQLAVNQS. An N-linked (GlcNAc...) asparagine glycan is attached at Asn-210. A helical transmembrane segment spans residues 213-233; it reads WVFINFLLFLIPTLVMITVYS. The Cytoplasmic portion of the chain corresponds to 234-274; it reads KIFLIAKQQAQNIEKMSKQTARASDSYKDRVAKRERKAAKT. The chain crosses the membrane as a helical span at residues 275–295; it reads LGIAVAAFLLSWLPYFIDSFI. The Extracellular portion of the chain corresponds to 296 to 309; it reads DAFLGFITPTYVYE. A helical membrane pass occupies residues 310–333; sequence ILVWIAYYNSAMNPLIYAFFYPWF. Residues 334–358 lie on the Cytoplasmic side of the membrane; that stretch reads RKAIKLTVTGKILRENSSTTNLFPE.

It belongs to the G-protein coupled receptor 1 family. In terms of tissue distribution, specifically expressed in neurons of the olfactory epithelium.

Its subcellular location is the cell membrane. Its function is as follows. Olfactory receptor specific for N,N-dimethylalkylamines trace amines. Trace amine compounds are enriched in animal body fluids and act on trace amine-associated receptors (TAARs) to elicit both intraspecific and interspecific innate behaviors. Ligand-binding causes a conformation change that triggers signaling via G(s)-class of G alpha proteins (GNAL or GNAS). The polypeptide is Trace amine-associated receptor 7e (Mus musculus (Mouse)).